Consider the following 152-residue polypeptide: Transcriptional regulator MraZ (152 aa).

2 SpoVT-AbrB domains span residues 5–52 (ATLV…PLPE) and 81–124 (ASEC…DETT).

It belongs to the MraZ family. As to quaternary structure, forms oligomers.

The protein resides in the cytoplasm. It localises to the nucleoid. Its function is as follows. Negatively regulates its own expression and that of the subsequent genes in the proximal part of the division and cell wall (dcw) gene cluster. Acts by binding directly to DNA. May also regulate the expression of genes outside the dcw cluster. This chain is Transcriptional regulator MraZ, found in Citrobacter koseri (strain ATCC BAA-895 / CDC 4225-83 / SGSC4696).